Consider the following 191-residue polypeptide: Xanthine phosphoribosyltransferase (191 aa).

L20 and N27 together coordinate xanthine. Residue 128 to 132 coordinates 5-phospho-alpha-D-ribose 1-diphosphate; the sequence is ANGQA. Position 156 (K156) interacts with xanthine.

It belongs to the purine/pyrimidine phosphoribosyltransferase family. Xpt subfamily. Homodimer.

The protein resides in the cytoplasm. The enzyme catalyses XMP + diphosphate = xanthine + 5-phospho-alpha-D-ribose 1-diphosphate. The protein operates within purine metabolism; XMP biosynthesis via salvage pathway; XMP from xanthine: step 1/1. Functionally, converts the preformed base xanthine, a product of nucleic acid breakdown, to xanthosine 5'-monophosphate (XMP), so it can be reused for RNA or DNA synthesis. The polypeptide is Xanthine phosphoribosyltransferase (Acinetobacter baylyi (strain ATCC 33305 / BD413 / ADP1)).